Consider the following 145-residue polypeptide: Enhancer of mRNA-decapping protein 2 (145 aa).

Disordered regions lie at residues 1 to 74 (MGSE…DKAT) and 89 to 115 (PKKK…IDSK). The span at 29–42 (TKTQILVPPTQSLP) shows a compositional bias: polar residues. Residues 55 to 73 (QRREPRERTSKTGHEDDKA) are compositionally biased toward basic and acidic residues. A compositionally biased stretch (basic residues) spans 89-102 (PKKKSCKYKKKKTR).

It belongs to the EDC family.

Its subcellular location is the cytoplasm. The protein localises to the nucleus. Its function is as follows. mRNA-binding protein which stimulates mRNA decapping by DCP1 and DCP2. This chain is Enhancer of mRNA-decapping protein 2 (EDC2), found in Saccharomyces cerevisiae (strain ATCC 204508 / S288c) (Baker's yeast).